Consider the following 850-residue polypeptide: Trimethylamine-N-oxide reductase (850 aa).

A signal peptide (tat-type signal) is located at residues 1 to 39 (MKNKDSLHVSRRRFLAQLGGLTVAGMLGPSLLTPRSARA). Ser191 contributes to the Mo-bis(molybdopterin guanine dinucleotide) binding site.

It belongs to the prokaryotic molybdopterin-containing oxidoreductase family. It depends on Mo-bis(molybdopterin guanine dinucleotide) as a cofactor. In terms of processing, predicted to be exported by the Tat system. The position of the signal peptide cleavage has not been experimentally proven.

The protein localises to the periplasm. It carries out the reaction trimethylamine + 2 Fe(III)-[cytochrome c] + H2O = trimethylamine N-oxide + 2 Fe(II)-[cytochrome c] + 3 H(+). Reduces trimethylamine-N-oxide (TMAO) into trimethylamine; an anaerobic reaction coupled to energy-yielding reactions. The protein is Trimethylamine-N-oxide reductase (torA) of Salmonella typhi.